Consider the following 443-residue polypeptide: Squalene synthase (443 aa).

Helical transmembrane passes span 291–311 and 423–443; these read TSFNFCAIPQVMAIATLELVF and ILLLSLGVAVFGVVYGVVRII.

This sequence belongs to the phytoene/squalene synthase family. The cofactor is Mg(2+).

Its subcellular location is the endoplasmic reticulum membrane. It catalyses the reaction 2 (2E,6E)-farnesyl diphosphate + NADPH + H(+) = squalene + 2 diphosphate + NADP(+). It carries out the reaction 2 (2E,6E)-farnesyl diphosphate + NADH + H(+) = squalene + 2 diphosphate + NAD(+). It participates in terpene metabolism; lanosterol biosynthesis; lanosterol from farnesyl diphosphate: step 1/3. Functionally, catalyzes the condensation of 2 two farnesyl pyrophosphate moieties to form squalene. It is the first committed enzyme of the sterol biosynthesis pathway. Required for the biosynthesis of ergosterol. This is Squalene synthase (ERG9) from Cyberlindnera jadinii (Torula yeast).